The primary structure comprises 551 residues: Putative BTB/POZ domain-containing protein L76 (551 aa).

The 72-residue stretch at 19–90 folds into the BTB domain; sequence TDIILEIEDD…FYGQENDVID (72 aa).

This sequence belongs to the mimivirus BTB/WD family.

This Acanthamoeba polyphaga (Amoeba) protein is Putative BTB/POZ domain-containing protein L76.